The primary structure comprises 461 residues: Asparagine--tRNA ligase (461 aa).

The protein belongs to the class-II aminoacyl-tRNA synthetase family. Homodimer.

The protein resides in the cytoplasm. It catalyses the reaction tRNA(Asn) + L-asparagine + ATP = L-asparaginyl-tRNA(Asn) + AMP + diphosphate + H(+). The protein is Asparagine--tRNA ligase of Geobacter metallireducens (strain ATCC 53774 / DSM 7210 / GS-15).